The following is a 381-amino-acid chain: Anti-sigma-I factor RsgI (381 aa).

Over 1-63 (MRRGIIVEKN…FDFFKLRPFK (63 aa)) the chain is Cytoplasmic. The RsgI N-terminal anti-sigma domain maps to 2–50 (RRGIIVEKNKKFVTLLTPDGQFLKAKNDRHSYEIGEEIMLPSETRMGRR). A helical membrane pass occupies residues 64–84 (MGIFTMTAIMLFIFIVLPVFS). The Extracellular portion of the chain corresponds to 85–381 (NNKAYAYMTI…NEDSPSAPGE (297 aa)). The tract at residues 198 to 381 (SDMQTREKAK…NEDSPSAPGE (184 aa)) is disordered. 4 stretches are compositionally biased toward basic and acidic residues: residues 200–210 (MQTREKAKKEG), 219–244 (SNEK…QKSD), 273–321 (GDQK…DKGN), and 349–359 (SRRDNASDRRN).

Interacts (via RsgI N-terminal anti-sigma domain) with SigI.

The protein resides in the cell membrane. Its function is as follows. Anti-sigma factor for SigI. Negatively regulates SigI activity through direct interaction. The chain is Anti-sigma-I factor RsgI from Bacillus subtilis (strain 168).